Reading from the N-terminus, the 306-residue chain is MAALLGRDLLSLADISSTELQELLQLATQLKSQQLKLQCNKVLGLLFSKASTRTRVSFTVAMYQLGGQVIDLNPNVTQVSRGEPLQDTARVLDRYLDILAIRTFAQQDLETFAHYAKIPVINALTDAEHPCQVLADLLTIQESFNTLAGLTLTYVGDGNNMANSLMLGCALVGMNVRIATPDGYEPDSQIVEQARAIANNKTEVLLTHDPELAAKGSTVLYTDVWASMGQETEADNRMPIFQPYQISEQLLSLAAPEAIVLHCLPAHRGEEITEAVIEGSQSRVWEQAENRLHAQKALLASILGAE.

Carbamoyl phosphate-binding positions include 51–54 (STRT), Gln-78, Arg-102, and 129–132 (HPCQ). Residues Asn-160, Asp-223, and 227–228 (SM) contribute to the L-ornithine site. Carbamoyl phosphate is bound by residues 263–264 (CL) and Arg-291.

This sequence belongs to the aspartate/ornithine carbamoyltransferase superfamily. OTCase family.

The protein localises to the cytoplasm. It catalyses the reaction carbamoyl phosphate + L-ornithine = L-citrulline + phosphate + H(+). Its pathway is amino-acid biosynthesis; L-arginine biosynthesis; L-arginine from L-ornithine and carbamoyl phosphate: step 1/3. Reversibly catalyzes the transfer of the carbamoyl group from carbamoyl phosphate (CP) to the N(epsilon) atom of ornithine (ORN) to produce L-citrulline. The sequence is that of Ornithine carbamoyltransferase (argF) from Nostoc punctiforme (strain ATCC 29133 / PCC 73102).